The sequence spans 158 residues: Disease resistance response protein DRRG49-C (158 aa).

This sequence belongs to the BetVI family.

In Pisum sativum (Garden pea), this protein is Disease resistance response protein DRRG49-C.